Reading from the N-terminus, the 430-residue chain is Dihydroorotase (430 aa).

Zn(2+) is bound by residues His-60 and His-62. Substrate contacts are provided by residues 62–64 (HFR) and Asn-94. Zn(2+) contacts are provided by Asp-151, His-178, and His-231. Asn-277 is a substrate binding site. Asp-304 lines the Zn(2+) pocket. Asp-304 is a catalytic residue. Substrate is bound by residues His-308 and 322-323 (FG).

This sequence belongs to the metallo-dependent hydrolases superfamily. DHOase family. Class I DHOase subfamily. Zn(2+) serves as cofactor.

The catalysed reaction is (S)-dihydroorotate + H2O = N-carbamoyl-L-aspartate + H(+). Its pathway is pyrimidine metabolism; UMP biosynthesis via de novo pathway; (S)-dihydroorotate from bicarbonate: step 3/3. Its function is as follows. Catalyzes the reversible cyclization of carbamoyl aspartate to dihydroorotate. This chain is Dihydroorotase, found in Carboxydothermus hydrogenoformans (strain ATCC BAA-161 / DSM 6008 / Z-2901).